The sequence spans 905 residues: Probable cation-transporting ATPase F (905 aa).

The next 3 membrane-spanning stretches (helical) occupy residues 84–104 (EFVD…VGFI), 248–268 (FSKF…GVGL), and 283–303 (ALAV…TLAI). Asp333 functions as the 4-aspartylphosphate intermediate in the catalytic mechanism. Asp643 and Asp647 together coordinate Mg(2+). A run of 6 helical transmembrane segments spans residues 716-736 (ILAA…ILWI), 738-758 (MTTA…AGIM), 778-798 (TLLV…WELD), 808-828 (TAAL…CRSL), 842-862 (WIIL…YLPA), and 872-892 (IDIG…IVVA).

This sequence belongs to the cation transport ATPase (P-type) (TC 3.A.3) family. Type IIA subfamily.

Its subcellular location is the cell membrane. It catalyses the reaction ATP + H2O = ADP + phosphate + H(+). The sequence is that of Probable cation-transporting ATPase F (ctpF) from Mycobacterium bovis (strain ATCC BAA-935 / AF2122/97).